Here is a 334-residue protein sequence, read N- to C-terminus: Trans-1,2-dihydrobenzene-1,2-diol dehydrogenase (334 aa).

This sequence belongs to the Gfo/Idh/MocA family. Homodimer. In terms of tissue distribution, kidney.

It carries out the reaction (1R,2R)-1,2-dihydrobenzene-1,2-diol + NADP(+) = catechol + NADPH + H(+). It catalyses the reaction D-xylose + NADP(+) = D-xylono-1,5-lactone + NADPH + H(+). The sequence is that of Trans-1,2-dihydrobenzene-1,2-diol dehydrogenase (DHDH) from Macaca fascicularis (Crab-eating macaque).